The primary structure comprises 410 residues: Cytochrome P450 CYP107DY1 (410 aa).

Heme-binding residues include His-106 and Arg-110. 2 residues coordinate substrate: Thr-249 and Glu-253. Residues Arg-302, His-358, and Cys-360 each coordinate heme.

The protein belongs to the cytochrome P450 family. Requires heme as cofactor.

The catalysed reaction is mevastatin + 2 reduced [2Fe-2S]-[ferredoxin] + O2 + 2 H(+) = pravastatin lactone + 2 oxidized [2Fe-2S]-[ferredoxin] + H2O. Its function is as follows. Cytochrome P450 whose physiological substrate is unknown. In vitro, is able to catalyze the selective hydroxylation of mevastatin to pravastatin, the widely used therapeutic agent for hypercholesterolemia. This is Cytochrome P450 CYP107DY1 from Priestia megaterium (strain ATCC 12872 / QMB1551) (Bacillus megaterium).